The primary structure comprises 117 residues: MKVPAPYAWNSDFATTYENIDSEHRTLFNGLFALAEFNTLTQLNAAIEVFTLHFHDEQGQMIRSNYVNTKEHTDIHNGFMDVMRGWRSPVPQQDLLAGMAWLANHIPTEDFKYKGKL.

The Fe cation site is built by H24, H53, E57, H72, H76, H105, and D110.

It belongs to the hemerythrin family. Octamer composed of two types of chains: alpha and beta.

Its function is as follows. Hemerythrin is a respiratory protein in blood cells of certain marine worms. The oxygen-binding site in each chain contains two iron atoms. This is Hemerythrin subunit beta from Lingula reevii (Inarticulated brachiopod).